A 607-amino-acid chain; its full sequence is Elongation factor 4 (607 aa).

Positions 11–193 (SKIRNFSIIA…QIVEKVPAPT (183 aa)) constitute a tr-type G domain. Residues 23–28 (DHGKST) and 140–143 (NKID) each bind GTP.

It belongs to the TRAFAC class translation factor GTPase superfamily. Classic translation factor GTPase family. LepA subfamily.

The protein resides in the cell membrane. The enzyme catalyses GTP + H2O = GDP + phosphate + H(+). In terms of biological role, required for accurate and efficient protein synthesis under certain stress conditions. May act as a fidelity factor of the translation reaction, by catalyzing a one-codon backward translocation of tRNAs on improperly translocated ribosomes. Back-translocation proceeds from a post-translocation (POST) complex to a pre-translocation (PRE) complex, thus giving elongation factor G a second chance to translocate the tRNAs correctly. Binds to ribosomes in a GTP-dependent manner. The protein is Elongation factor 4 of Bacillus cereus (strain AH820).